The chain runs to 262 residues: Transcription factor bHLH81 (262 aa).

Residues Met-1–Leu-29 are disordered. A compositionally biased stretch (gly residues) spans Ser-8–Ser-25. Residues Cys-190–Leu-240 enclose the bHLH domain.

As to quaternary structure, homodimer. In terms of tissue distribution, expressed in flowers.

The protein localises to the nucleus. The protein is Transcription factor bHLH81 (BHLH81) of Arabidopsis thaliana (Mouse-ear cress).